The following is a 71-amino-acid chain: Biotinylated protein TB7.3 homolog (71 aa).

The Biotinyl-binding domain maps to 2-71 (AEDVRAEIVA…QAGDLIAVIS (70 aa)). Position 37 is an N6-biotinyllysine (Lys37).

This is Biotinylated protein TB7.3 homolog from Mycobacterium leprae (strain TN).